The chain runs to 174 residues: MLTYGAPFNFPRWIDEHAHLLKPPVGNRQVWQDSDFIVTVVGGPNHRTDYHDDPLEEFFYQLRGNAYLNLWVDGRRERADLKEGDIFLLPPHVRHSPQRPEAGSACLVIERQRPAGMLDGFEWYCDACGHLVHRVEVQLKSIVTDLPPLFESFYASEDKRRCPHCGQVHPGRAA.

Position 47 (Arg47) interacts with O2. Residues His51, Glu57, and His95 each contribute to the Fe cation site. Position 57 (Glu57) interacts with substrate. Residues Arg99 and Glu110 each contribute to the substrate site. Fe cation is bound by residues Cys125, Cys128, Cys162, and Cys165.

This sequence belongs to the 3-HAO family. Homodimer. Fe(2+) serves as cofactor.

It carries out the reaction 3-hydroxyanthranilate + O2 = (2Z,4Z)-2-amino-3-carboxymuconate 6-semialdehyde. Its pathway is cofactor biosynthesis; NAD(+) biosynthesis; quinolinate from L-kynurenine: step 3/3. Its activity is regulated as follows. Inhibited by 4-chloro-3-hydroxyanthranilate. Mechanism of inactivation involves the oxidation of the catalytic active site Fe(2+) to the catalytically inactive Fe(3+) oxidation state, superoxide production, and formation of two disulfide bonds between Cys-125 and Cys-128, and Cys-162 and Cys-165. Enzyme can be reactivated under reducing conditions. In terms of biological role, catalyzes the oxidative ring opening of 3-hydroxyanthranilate to 2-amino-3-carboxymuconate semialdehyde, which spontaneously cyclizes to quinolinate. The protein is 3-hydroxyanthranilate 3,4-dioxygenase of Cupriavidus metallidurans (strain ATCC 43123 / DSM 2839 / NBRC 102507 / CH34) (Ralstonia metallidurans).